The chain runs to 174 residues: Small ribosomal subunit protein uS5 (174 aa).

The S5 DRBM domain maps to 19-82 (LREKMIAINR…EEARRNMTKI (64 aa)).

It belongs to the universal ribosomal protein uS5 family. As to quaternary structure, part of the 30S ribosomal subunit. Contacts proteins S4 and S8.

Its function is as follows. With S4 and S12 plays an important role in translational accuracy. Located at the back of the 30S subunit body where it stabilizes the conformation of the head with respect to the body. The chain is Small ribosomal subunit protein uS5 from Albidiferax ferrireducens (strain ATCC BAA-621 / DSM 15236 / T118) (Rhodoferax ferrireducens).